A 176-amino-acid polypeptide reads, in one-letter code: Conjugal transfer protein TraF (176 aa).

A signal peptide spans 1–24 (MSKRAVIRFLGVAGLVLSGATVMG).

The protein belongs to the peptidase S26C family.

Its subcellular location is the periplasm. Its function is as follows. Involved in conjugal transfer of the plasmid. This is Conjugal transfer protein TraF (traF) from Agrobacterium fabrum (strain C58 / ATCC 33970) (Agrobacterium tumefaciens (strain C58)).